We begin with the raw amino-acid sequence, 212 residues long: Large ribosomal subunit protein uL4 (212 aa).

Residues 54–65 are compositionally biased toward polar residues; the sequence is SQKSRSDVSGSN. Residues 54–85 are disordered; that stretch reads SQKSRSDVSGSNKKPWRQKGTGRARSGSVKSP.

This sequence belongs to the universal ribosomal protein uL4 family. Part of the 50S ribosomal subunit.

One of the primary rRNA binding proteins, this protein initially binds near the 5'-end of the 23S rRNA. It is important during the early stages of 50S assembly. It makes multiple contacts with different domains of the 23S rRNA in the assembled 50S subunit and ribosome. Its function is as follows. Forms part of the polypeptide exit tunnel. This Blochmanniella floridana protein is Large ribosomal subunit protein uL4.